Reading from the N-terminus, the 272-residue chain is 2-dehydro-3-deoxyphosphooctonate aldolase (272 aa).

Belongs to the KdsA family.

The protein resides in the cytoplasm. It carries out the reaction D-arabinose 5-phosphate + phosphoenolpyruvate + H2O = 3-deoxy-alpha-D-manno-2-octulosonate-8-phosphate + phosphate. Its pathway is carbohydrate biosynthesis; 3-deoxy-D-manno-octulosonate biosynthesis; 3-deoxy-D-manno-octulosonate from D-ribulose 5-phosphate: step 2/3. It functions in the pathway bacterial outer membrane biogenesis; lipopolysaccharide biosynthesis. The chain is 2-dehydro-3-deoxyphosphooctonate aldolase from Pelobacter propionicus (strain DSM 2379 / NBRC 103807 / OttBd1).